Here is an 887-residue protein sequence, read N- to C-terminus: MKESNLVGDIRKLFVDFFIKNGHQLFPSSPLIVKDDPSLLFTNAGMVQFKHVFTDASNANVGTAVSSQKCLRVGGKHNDLENVGYTNRHHTFFEMLGNFSFGDYFKEFAVELAWSFVTKELALNKDKLYFTVYHEDQETFDLWKKISGFSENRIIKIKTNDNFWSMGSTGPCGPCSEIFYDYGEDIEGGLPGTPEEDGARFTEIWNLVFMQYNRKSDGELCALPKKCIDTGMGLERISAVMQGVHDNYDINLFKDLIKVSKKQSGNTNNELAHRVIADHVRSAAFLIAEGLTPGNEGRDYILRRIIRRAARYVYMLKYDGALMYQIFPSLIDEKSYAYMADYYPELINAKDLIISILKIEEENFKDTLVKALPLLEKELVGLSSGGVLPGDIAFKLYDTYGFPVDITLDIIKEKGIKFDEQGFYDQMDKQKERSKLNHSIKSVQQLKGKLWVDIKEHYGGTKFVGYEQYSTRAKVLSIIYEGDKSTEVANVGDRVNVLLDITPFYAESGGQKGDTGVFNVIVRQGKELLSCDDVVEVLDTKKVLDTLYIHECVIKTGSLIVGDIICAEVNCEKRKNLCANHSATHLLHYVLKSVIDRSIIQKGSLVSDDKLRFDFSYGVALTKEQLTLIEDKMFSLIRNNSPVVTHICDLKEAIADGAVALFTEKYEDHGVRVINIGDSKELCCGTHVRYTGEIGCFKIVSEASVACGVRRIEAVTGQHAIDYFREQEKMLHLIAESVKSPIDNILIQIDKLNRNNQELKQKLSDAYFSVINLQGIATDKIGSIDFLYSSLNSVPIDVVRKFINEHLVNDMIMFFSNVVGRNVMYVIGVASNLHSKIKATDFVEIIGEVIKSKGGGNNQLAQISGEYIKEVDVIFHVKNKLINVLRN.

The Zn(2+) site is built by H581, H585, C683, and H687.

The protein belongs to the class-II aminoacyl-tRNA synthetase family. Zn(2+) is required as a cofactor.

The protein resides in the cytoplasm. The enzyme catalyses tRNA(Ala) + L-alanine + ATP = L-alanyl-tRNA(Ala) + AMP + diphosphate. In terms of biological role, catalyzes the attachment of alanine to tRNA(Ala) in a two-step reaction: alanine is first activated by ATP to form Ala-AMP and then transferred to the acceptor end of tRNA(Ala). Also edits incorrectly charged Ser-tRNA(Ala) and Gly-tRNA(Ala) via its editing domain. This chain is Alanine--tRNA ligase, found in Ehrlichia canis (strain Jake).